Here is a 266-residue protein sequence, read N- to C-terminus: Undecaprenyl-diphosphatase (266 aa).

Helical transmembrane passes span 3 to 23 (MSLL…FLPV), 41 to 61 (GTET…VVLY), 86 to 106 (VLVG…AIKA), 108 to 128 (LNTP…ILVI), 149 to 171 (FGVG…ATIM), 184 to 204 (AEYS…LALW), 220 to 240 (IGFV…LGVV), and 245 to 265 (FAPF…WLLA).

Belongs to the UppP family.

Its subcellular location is the cell inner membrane. It carries out the reaction di-trans,octa-cis-undecaprenyl diphosphate + H2O = di-trans,octa-cis-undecaprenyl phosphate + phosphate + H(+). In terms of biological role, catalyzes the dephosphorylation of undecaprenyl diphosphate (UPP). Confers resistance to bacitracin. In Rhizorhabdus wittichii (strain DSM 6014 / CCUG 31198 / JCM 15750 / NBRC 105917 / EY 4224 / RW1) (Sphingomonas wittichii), this protein is Undecaprenyl-diphosphatase.